The following is a 1036-amino-acid chain: Protein smoothened (1036 aa).

An N-terminal signal peptide occupies residues 1–31 (MQYLNFPRMPNIMMFLEVAILCLWVVADASA). Residues 32 to 258 (SSAKFGSTTP…DDEHRQIHKL (227 aa)) lie on the Extracellular side of the membrane. Residues N55 and N95 are each glycosylated (N-linked (GlcNAc...) asparagine). Residues 85 to 206 (VRRARCYPTS…TLFPTKCTNG (122 aa)) form the FZ domain. Cystine bridges form between C90-C155, C100-C148, C139-C179, and C172-C194. 3 N-linked (GlcNAc...) asparagine glycosylation sites follow: N184, N195, and N213. 2 disulfides stabilise this stretch: C218–C238 and C242–C320. The chain crosses the membrane as a helical span at residues 259–279 (IGWAGSICLLSNLFVVSTFFI). Residues 280-287 (DWKNANKY) are Cytoplasmic-facing. The helical transmembrane segment at 288–308 (PAVIVFYINLCFLIACVGWLL) threads the bilayer. The Extracellular portion of the chain corresponds to 309–339 (QFTSGSREDIVCRKDGTLRHSEPTAGENLSC). A glycan (N-linked (GlcNAc...) asparagine) is linked at N336. Residues C339 and C413 are joined by a disulfide bond. A helical transmembrane segment spans residues 340 to 360 (IVIFVLVYYFLTAGMVWFVFL). Topologically, residues 361-381 (TYAWHWRAMGHVQDRIDKKGS) are cytoplasmic. The helical transmembrane segment at 382–402 (YFHLVAWSLPLVLTITTMAFS) threads the bilayer. At 403-421 (EVDGNSIVGICFVGYINHS) the chain is on the extracellular side. Residue N419 is glycosylated (N-linked (GlcNAc...) asparagine). The chain crosses the membrane as a helical span at residues 422–442 (MRAGLLLGPLCGVILIGGYFI). The Cytoplasmic portion of the chain corresponds to 443-469 (TRGMVMLFGLKHFANDIKSTSASNKIH). Residues 470-490 (LIIMRMGVCALLTLVFILVAI) traverse the membrane as a helical segment. Over 491-532 (ACHVTEFRHADEWAQSFRQFIICKISSVFEEKSSCRIENRPS) the chain is Extracellular. C513 and C525 form a disulfide bridge. A helical transmembrane segment spans residues 533-553 (VGVLQLHLLCLFSSGIVMSTW). The Cytoplasmic portion of the chain corresponds to 554 to 1036 (CWTPSSIETW…KLKMLLLPSK (483 aa)). S658, S659, S667, S670, S673, S687, S690, and S693 each carry phosphoserine. Disordered regions lie at residues 678–745 (HVSV…TSVE) and 870–902 (IKKSNESNSNRHSRNSARSQSKKSQKRHLKNPA). Residues 880–899 (RHSRNSARSQSKKSQKRHLK) show a composition bias toward basic residues.

This sequence belongs to the G-protein coupled receptor Fz/Smo family. Interacts with cos. Phosphorylation by CkIalpha and PKA regulates smo accumulation at the cell surface and its signaling activity in response to hh. As to expression, expressed in olfactory sensory neurons (at protein level).

The protein resides in the cell membrane. Its subcellular location is the cell projection. It is found in the cilium. Its function is as follows. Segment polarity protein required for correct patterning of every segment. G protein-coupled receptor which associates with the patched protein (ptc) to transduce the hedgehog (hh) signal through the activation of an inhibitory G-protein. In the absence of hh, ptc represses the constitutive signaling activity of smo through fused (fu). Essential component of a hh-signaling pathway which regulates the Duox-dependent gut immune response to bacterial uracil; required to activate Cad99C-dependent endosome formation, norpA-dependent Ca2+ mobilization and p38 MAPK, which are essential steps in the Duox-dependent production of reactive oxygen species (ROS) in response to intestinal bacterial infection. The sequence is that of Protein smoothened (smo) from Drosophila melanogaster (Fruit fly).